Reading from the N-terminus, the 206-residue chain is 2-phospho-L-lactate guanylyltransferase (206 aa).

It belongs to the CofC family. As to quaternary structure, homodimer.

The enzyme catalyses (2S)-2-phospholactate + GTP + H(+) = (2S)-lactyl-2-diphospho-5'-guanosine + diphosphate. Its pathway is cofactor biosynthesis; coenzyme F420 biosynthesis. Functionally, guanylyltransferase that catalyzes the activation of (2S)-2-phospholactate (2-PL) as (2S)-lactyl-2-diphospho-5'-guanosine, via the condensation of 2-PL with GTP. It is involved in the biosynthesis of coenzyme F420, a hydride carrier cofactor. This chain is 2-phospho-L-lactate guanylyltransferase, found in Archaeoglobus profundus (strain DSM 5631 / JCM 9629 / NBRC 100127 / Av18).